The sequence spans 217 residues: Ras-related protein RABA1f (217 aa).

GTP is bound at residue 20-27 (GDSGVGKS). An Effector region motif is present at residues 42-50 (SKSTIGVEF). Residues 68–72 (DTAGQ), 126–129 (NKAD), and 156–157 (SA) each bind GTP. Residues Cys-214 and Cys-215 are each lipidated (S-geranylgeranyl cysteine).

This sequence belongs to the small GTPase superfamily. Rab family.

It is found in the cell membrane. Its function is as follows. Intracellular vesicle trafficking and protein transport. In Arabidopsis thaliana (Mouse-ear cress), this protein is Ras-related protein RABA1f (RABA1F).